Reading from the N-terminus, the 432-residue chain is uncharacterized protein (432 aa).

Transmembrane regions (helical) follow at residues 35–55, 60–80, 112–132, 144–164, 185–205, 209–229, 242–262, 274–294, 313–333, 359–379, 384–404, and 408–428; these read VARV…VIYL, LPPA…IATG, VAGM…PLWS, VGLL…LGAL, LAVA…LWAA, AVAW…ASLL, AHSI…PVLL, GAVI…LSAM, LIAP…AAGL, AAAV…AAAL, LLGW…PMPL, and TVIA…AALA.

This sequence to M.tuberculosis Rv3630 and M.bovis Mb3654.

The protein resides in the cell membrane. This is an uncharacterized protein from Mycobacterium tuberculosis (strain CDC 1551 / Oshkosh).